Here is a 546-residue protein sequence, read N- to C-terminus: FAD-dependent monooxygenase (546 aa).

An N-terminal signal peptide occupies residues 1–17; sequence MYDVIVVGAGWCGLAAA. Ile106 serves as a coordination point for FAD. 2 N-linked (GlcNAc...) asparagine glycosylation sites follow: Asn239 and Asn343.

It belongs to the FAD-binding monooxygenase family. It depends on FAD as a cofactor.

It functions in the pathway antifungal biosynthesis. In terms of biological role, FAD-dependent monooxygenase; part of the gene cluster that mediates the biosynthesis of the tetrahydropyranyl antifungal agent lanomycin that acts as an inhibitor of CYP51 and blocks the ergosterol biosynthesis. The biosynthesis probably begins with the formation of an hexaketide, followed by methionine mediated alkylation of C-2 and C-6, and methylation of the reduced C-3 oxygen, pyran forming reductive ring closure, oxygenation of C-4, beta-keto reduction, enoyl reduction and dehydration of the remaining oxygens, and finally, acylation with glycine to complete the biosynthesis. The polypeptide is FAD-dependent monooxygenase (Pyrenophora dematioidea (Helminthosporium dematioideum)).